The following is a 321-amino-acid chain: tRNA(Ile)-lysidine synthase (321 aa).

Residue 21–26 participates in ATP binding; that stretch reads SYGSDS.

Belongs to the tRNA(Ile)-lysidine synthase family.

It is found in the cytoplasm. It catalyses the reaction cytidine(34) in tRNA(Ile2) + L-lysine + ATP = lysidine(34) in tRNA(Ile2) + AMP + diphosphate + H(+). Its function is as follows. Ligates lysine onto the cytidine present at position 34 of the AUA codon-specific tRNA(Ile) that contains the anticodon CAU, in an ATP-dependent manner. Cytidine is converted to lysidine, thus changing the amino acid specificity of the tRNA from methionine to isoleucine. This chain is tRNA(Ile)-lysidine synthase, found in Campylobacter jejuni (strain RM1221).